The chain runs to 292 residues: Glycine--tRNA ligase alpha subunit (292 aa).

The protein belongs to the class-II aminoacyl-tRNA synthetase family. In terms of assembly, tetramer of two alpha and two beta subunits.

The protein localises to the cytoplasm. It catalyses the reaction tRNA(Gly) + glycine + ATP = glycyl-tRNA(Gly) + AMP + diphosphate. In Clostridioides difficile (strain 630) (Peptoclostridium difficile), this protein is Glycine--tRNA ligase alpha subunit.